We begin with the raw amino-acid sequence, 156 residues long: Longistatin (156 aa).

An N-terminal signal peptide occupies residues 1–21 (MTHRRLLWALCVAALLGVVAA). 2 consecutive EF-hand domains span residues 70-105 (SQDELYFYYFRMHDFDNNNKLDGQEMMAAMFHTNHH) and 123-156 (DIASYVDSVLRADKNQDGFISYPELRTSDLTNQI). Ca(2+) contacts are provided by Asp-83, Asp-85, Asn-87, Lys-89, Glu-94, Asp-135, Asn-137, Asp-139, Phe-141, and Glu-146.

Interacts with host fibrin. Interacts with human RAGE/AGER. Saliva (at protein level). Salivary gland (at protein level). Not detected in midgut, ovary, trachea, Malpighian tubule system, synganglion and cuticle.

Its subcellular location is the secreted. It is found in the cytoplasm. Its activity is regulated as follows. Resistant to inhibition by host SERPINE1. Inhibited by PMSF, aprotinin, antipain and leupeptin. Inhibited by Zn(2+). Its function is as follows. Anticoagulant and fibrinolytic protease that modulates blood feeding of ticks on vertebrate hosts. Degrades host fibrinogen and delays fibrin clot formation. Promotes lysis of fibrin clots in the host by activating host plasminogen in the presence of soluble fibrin. Binds Ca(2+). Hydrolyzes serine protease-specific substrates. Required for the formation of a blood pool, an accumulation of blood and tissue fluid developed at the tick's feeding site. Blocks activation of host AGER/RAGE. Reduces AGER/RAGE-dependent production of reactive oxygen species (ROS) in human endothelial cells. Prevents AGER/RAGE-dependent activation of NF-kappa-B and suppresses expression of adhesion molecules, such as VCAM1, ICAM1 and SELE, and secretion of cytokines, such as CSF3/GCSF and TGF-beta, in human endothelial cells. Suppresses RAGE/AGER-mediated migration of mouse peritoneal resident cells. Reduces AGER/RAGE-mediated inflammation in mice tissues. This chain is Longistatin, found in Haemaphysalis longicornis (Bush tick).